Reading from the N-terminus, the 95-residue chain is Putative small ubiquitin-related modifier 7 (95 aa).

One can recognise a Ubiquitin-like domain in the interval 13 to 90; the sequence is SHITIKIKSQ…IDAFVDQIAG (78 aa). A Glycyl lysine isopeptide (Gly-Lys) (interchain with K-? in acceptor proteins) cross-link involves residue G90.

It belongs to the ubiquitin family. SUMO subfamily. Interacts with SAE2, SCE1, SIZ1 and MMS21 Covalently attached to a number of proteins.

It is found in the nucleus. The protein localises to the cytoplasm. Ubiquitin-like protein which can be covalently attached to target lysines as a monomer. Does not seem to be involved in protein degradation and may function as an antagonist of ubiquitin in the degradation process. This is Putative small ubiquitin-related modifier 7 (SUMO7) from Arabidopsis thaliana (Mouse-ear cress).